The following is a 941-amino-acid chain: Endoglucanase (941 aa).

A signal peptide spans 1–29; it reads MKIKQIKQSLSLLLIITLIMSLFVPMASA. 3 consecutive SLH domains span residues 37 to 94, 95 to 158, and 161 to 224; these read NAFP…GLEA, SSKD…LSLP, and QREY…DYLY. The Proton donor role is filled by glutamate 373. Glutamate 485 acts as the Nucleophile in catalysis.

Belongs to the glycosyl hydrolase 5 (cellulase A) family.

It carries out the reaction Endohydrolysis of (1-&gt;4)-beta-D-glucosidic linkages in cellulose, lichenin and cereal beta-D-glucans.. The chain is Endoglucanase from Bacillus sp. (strain KSM-635).